The following is a 316-amino-acid chain: Polyprenyl transferase ausN (316 aa).

The next 9 helical transmembrane spans lie at 45–65, 69–89, 108–128, 129–149, 163–183, 188–208, 233–253, 256–276, and 296–316; these read VVGV…TFLL, VILS…NDLI, GAVS…CGGS, LLLL…FFAL, LILT…DMNP, IPTL…DIVY, DQIA…GGIL, LGIP…LRFL, and SCLL…CVRL.

Belongs to the UbiA prenyltransferase family. Mg(2+) is required as a cofactor.

The protein localises to the membrane. It catalyses the reaction 3,5-dimethylorsellinate + (2E,6E)-farnesyl diphosphate = (3R)-3-farnesyl-6-hydroxy-2,3,5-trimethyl-4-oxocyclohexa-1,5-diene-1-carboxylate + diphosphate + H(+). The protein operates within secondary metabolite biosynthesis; terpenoid biosynthesis. In terms of biological role, polyprenyl transferase; part of the gene cluster A that mediates the biosynthesis of the fungal meroterpenoid acetoxydehydroaustin. The first step of the pathway is the synthesis of 3,5-dimethylorsellinic acid by the polyketide synthase ausA. 3,5-dimethylorsellinic acid is then prenylated by the polyprenyl transferase ausN. Further epoxidation by the FAD-dependent monooxygenase ausM and cyclization by the probable terpene cyclase ausL lead to the formation of protoaustinoid A. Protoaustinoid A is then oxidized to spiro-lactone preaustinoid A3 by the combined action of the FAD-binding monooxygenases ausB and ausC, and the dioxygenase ausE. Acid-catalyzed keto-rearrangement and ring contraction of the tetraketide portion of preaustinoid A3 by ausJ lead to the formation of preaustinoid A4. The aldo-keto reductase ausK, with the help of ausH, is involved in the next step by transforming preaustinoid A4 into isoaustinone which is in turn hydroxylated by the P450 monooxygenase ausI to form austinolide. The cytochrome P450 monooxygenase ausG then modifies austinolide to austinol. Austinol is further acetylated to austin by the O-acetyltransferase ausP, which spontaneously changes to dehydroaustin. The cytochrome P450 monooxygenase then converts dehydroaustin is into 7-dehydrodehydroaustin. The hydroxylation catalyzed by ausR permits the second O-acetyltransferase ausQ to add an additional acetyl group to the molecule, leading to the formation of acetoxydehydroaustin. Due to genetic rearrangements of the clusters and the subsequent loss of some enzymes, the end product of the Penicillium brasilianum austinoid biosynthesis clusters is acetoxydehydroaustin. In Penicillium brasilianum, this protein is Polyprenyl transferase ausN.